Reading from the N-terminus, the 444-residue chain is Bystin (444 aa).

Disordered stretches follow at residues 1-37 (MAKKRDRIVNTQPFISDDASVASSRKRSKVPKTHQKQ) and 53-85 (ALAQQKEVADEENAERNPSSAAFAVAGAATAGE). A compositionally biased stretch (basic residues) spans 24-34 (SRKRSKVPKTH). The span at 73–84 (AAFAVAGAATAG) shows a compositional bias: low complexity.

Belongs to the bystin family. Component of the 40S pre-ribosome. As to expression, highly expressed in flowers and at lower levels in roots, hypocotyls, stems, leaves, siliques and seeds.

It localises to the nucleus. The protein localises to the nucleolus. It is found in the nucleoplasm. Its function is as follows. Essential protein required during embryogenesis and pollen development. Required for processing of 20S pre-rRNA precursor and biogenesis of 40S ribosomal subunits. This is Bystin from Arabidopsis thaliana (Mouse-ear cress).